The chain runs to 61 residues: Small ribosomal subunit protein uS14 (61 aa).

Cysteine 24, cysteine 27, cysteine 40, and cysteine 43 together coordinate Zn(2+).

It belongs to the universal ribosomal protein uS14 family. Zinc-binding uS14 subfamily. As to quaternary structure, part of the 30S ribosomal subunit. Contacts proteins S3 and S10. Requires Zn(2+) as cofactor.

Functionally, binds 16S rRNA, required for the assembly of 30S particles and may also be responsible for determining the conformation of the 16S rRNA at the A site. The protein is Small ribosomal subunit protein uS14 of Thermotoga maritima (strain ATCC 43589 / DSM 3109 / JCM 10099 / NBRC 100826 / MSB8).